Here is a 143-residue protein sequence, read N- to C-terminus: Large ribosomal subunit protein uL15 (143 aa).

Residues 20 to 52 (GRGIGSGKGKTAGRGHKGQHSRAGGYHKVGFEG) are disordered. Residues 30-39 (TAGRGHKGQH) show a composition bias toward basic residues.

Belongs to the universal ribosomal protein uL15 family. In terms of assembly, part of the 50S ribosomal subunit.

Binds to the 23S rRNA. The sequence is that of Large ribosomal subunit protein uL15 from Coxiella burnetii (strain CbuG_Q212) (Coxiella burnetii (strain Q212)).